We begin with the raw amino-acid sequence, 666 residues long: Sodium/potassium/calcium exchanger 2 (666 aa).

Topologically, residues 1–38 are cytoplasmic; the sequence is MDLHQSPTARLLQKWCSHESPFGCRRHYNSRKKLKLIR. The helical transmembrane segment at 39–59 threads the bilayer; sequence VIGLVMGLVAVSTVPFSISAF. Residues 60 to 133 are Extracellular-facing; sequence TETDSQSNRG…DIFSLEERRK (74 aa). The disordered stretch occupies residues 63–122; the sequence is DSQSNRGEASDMSGPRVAQGHRQRTLLDLNDKIRDYTPQPPASQEDQAENSTEHTQGDYP. A glycan (N-linked (GlcNAc...) asparagine) is linked at Asn-112. Residues 113–122 are compositionally biased toward basic and acidic residues; that stretch reads STEHTQGDYP. The chain crosses the membrane as a helical span at residues 134–154; sequence GAIILHVIGMIYMFIALAIVC. The Cytoplasmic segment spans residues 155–179; the sequence is DEFFVPSLTVITEKLGISDDVAGAT. An Alpha-1 repeat occupies 175-215; that stretch reads VAGATFMAAGGSAPELFTSLIGVFIAHSNVGIGTIVGSAVF. The chain crosses the membrane as a helical span at residues 180 to 200; it reads FMAAGGSAPELFTSLIGVFIA. The Extracellular portion of the chain corresponds to 201-205; the sequence is HSNVG. A helical transmembrane segment spans residues 206–226; that stretch reads IGTIVGSAVFNILFVIGMCAL. Residues 227–237 lie on the Cytoplasmic side of the membrane; sequence FSREILNLTWW. Residues 238 to 258 traverse the membrane as a helical segment; the sequence is PLFRDVSFYIVDLLMLITFFL. The Extracellular segment spans residues 259–260; sequence DN. Residues 261 to 281 form a helical membrane-spanning segment; it reads VIMWWESLLLLTAYFAYVVFM. The Cytoplasmic segment spans residues 282 to 502; the sequence is KFNVQVERWV…PDVRKPASRK (221 aa). The tract at residues 311-336 is disordered; that stretch reads KSPTAGDKDGPTLPSKPRLQRGGSSA. Phosphoserine is present on residues Ser-337 and Ser-341. Positions 397–467 are disordered; sequence VDENERQNGA…EEDDQPLSLS (71 aa). Polar residues predominate over residues 416–442; sequence PNSTSTEVEMTPSSEASEPVQNGNLSH. The chain crosses the membrane as a helical span at residues 503-523; it reads FFPITFFGSITWIAVFSYLMV. The Extracellular segment spans residues 524–538; it reads WWAHQVGETIGISEE. A helical transmembrane segment spans residues 539 to 559; sequence IMGLTILAAGTSIPDLITSVI. Residues 546-577 form an Alpha-2 repeat; it reads AAGTSIPDLITSVIVARKGLGDMAVSSSVGSN. Residues 560–574 are Cytoplasmic-facing; it reads VARKGLGDMAVSSSV. The helical transmembrane segment at 575–595 threads the bilayer; sequence GSNIFDITVGLPLPWLLYTII. The Extracellular portion of the chain corresponds to 596–607; the sequence is HRFSPVTVSSNG. A helical transmembrane segment spans residues 608-628; it reads LFCAIVLLFIMLLFVILSIAL. Over 629-635 the chain is Cytoplasmic; that stretch reads CKWRMNK. Residues 636–656 form a helical membrane-spanning segment; it reads ILGFIMFGLYFVFLVVSVLLE. Topologically, residues 657–666 are extracellular; it reads DKVLVCPVSI.

The protein belongs to the Ca(2+):cation antiporter (CaCA) (TC 2.A.19) family. SLC24A subfamily.

It localises to the cell membrane. It carries out the reaction Ca(2+)(out) + K(+)(out) + 4 Na(+)(in) = Ca(2+)(in) + K(+)(in) + 4 Na(+)(out). Calcium, potassium:sodium antiporter that transports 1 Ca(2+) and 1 K(+) in exchange for 4 Na(+). Required for learming and memory by regulating neuronal Ca(2+), which is essential for the development of synaptic plasticity. The sequence is that of Sodium/potassium/calcium exchanger 2 from Mus musculus (Mouse).